Consider the following 341-residue polypeptide: Ribulose-5-phosphate reductase 2 (341 aa).

Residues cysteine 38, histidine 64, glutamate 65, and glutamate 144 each contribute to the Zn(2+) site.

The protein belongs to the zinc-containing alcohol dehydrogenase family. Heterodimer together with TarI. The cofactor is Zn(2+).

The catalysed reaction is D-ribitol 5-phosphate + NADP(+) = D-ribulose 5-phosphate + NADPH + H(+). Its pathway is cell wall biogenesis; poly(ribitol phosphate) teichoic acid biosynthesis. Functionally, catalyzes the NADPH dependent reduction of D-ribulose 5-phosphate to D-ribitol 5-phosphate. This chain is Ribulose-5-phosphate reductase 2, found in Staphylococcus aureus (strain NCTC 8325 / PS 47).